Here is a 562-residue protein sequence, read N- to C-terminus: Urease subunit alpha (562 aa).

The region spanning 131 to 562 (GGMDCHIHFI…LPMAQRYFLF (432 aa)) is the Urease domain. Positions 136, 138, and 219 each coordinate Ni(2+). An N6-carboxylysine modification is found at Lys-219. Residue His-221 participates in substrate binding. Residues His-248 and His-274 each contribute to the Ni(2+) site. His-322 functions as the Proton donor in the catalytic mechanism. Residue Asp-362 participates in Ni(2+) binding.

Belongs to the metallo-dependent hydrolases superfamily. Urease alpha subunit family. As to quaternary structure, heterotrimer of UreA (gamma), UreB (beta) and UreC (alpha) subunits. Three heterotrimers associate to form the active enzyme. Ni cation is required as a cofactor. In terms of processing, carboxylation allows a single lysine to coordinate two nickel ions.

It is found in the cytoplasm. The enzyme catalyses urea + 2 H2O + H(+) = hydrogencarbonate + 2 NH4(+). It participates in nitrogen metabolism; urea degradation; CO(2) and NH(3) from urea (urease route): step 1/1. In Paracoccus denitrificans (strain Pd 1222), this protein is Urease subunit alpha.